The chain runs to 362 residues: Endolytic peptidoglycan transglycosylase RlpA (362 aa).

An N-terminal signal peptide occupies residues 1-17; the sequence is MRKQWLGICIAAGMLAA. Cys18 carries N-palmitoyl cysteine lipidation. Residue Cys18 is the site of S-diacylglycerol cysteine attachment. Residues 198-276 form a disordered region; it reads PDLSGGAGTS…PSTTPATSPA (79 aa). Over residues 262–276 the composition is skewed to low complexity; sequence PVVTAPSTTPATSPA. One can recognise an SPOR domain in the interval 285-361; sequence QSASGNFMVQ…AQLQSFITTA (77 aa).

Belongs to the RlpA family.

The protein localises to the cell membrane. Its function is as follows. Lytic transglycosylase with a strong preference for naked glycan strands that lack stem peptides. The chain is Endolytic peptidoglycan transglycosylase RlpA from Escherichia coli (strain K12).